The primary structure comprises 341 residues: Holliday junction branch migration complex subunit RuvB (341 aa).

A large ATPase domain (RuvB-L) region spans residues 3-184 (DDFDIRDARM…FGINMHLEYY (182 aa)). ATP-binding positions include L23, R24, G65, K68, T69, T70, 131–133 (EDY), R174, Y184, and R221. T69 is a Mg(2+) binding site. The tract at residues 185–255 (DMETLTKIVL…IACFSLEALN (71 aa)) is small ATPAse domain (RuvB-S). Residues 258–341 (RYGLDQIDNK…RVGEQGFLFD (84 aa)) form a head domain (RuvB-H) region. R313 and R318 together coordinate DNA.

Belongs to the RuvB family. As to quaternary structure, homohexamer. Forms an RuvA(8)-RuvB(12)-Holliday junction (HJ) complex. HJ DNA is sandwiched between 2 RuvA tetramers; dsDNA enters through RuvA and exits via RuvB. An RuvB hexamer assembles on each DNA strand where it exits the tetramer. Each RuvB hexamer is contacted by two RuvA subunits (via domain III) on 2 adjacent RuvB subunits; this complex drives branch migration. In the full resolvosome a probable DNA-RuvA(4)-RuvB(12)-RuvC(2) complex forms which resolves the HJ.

It is found in the cytoplasm. The enzyme catalyses ATP + H2O = ADP + phosphate + H(+). The RuvA-RuvB-RuvC complex processes Holliday junction (HJ) DNA during genetic recombination and DNA repair, while the RuvA-RuvB complex plays an important role in the rescue of blocked DNA replication forks via replication fork reversal (RFR). RuvA specifically binds to HJ cruciform DNA, conferring on it an open structure. The RuvB hexamer acts as an ATP-dependent pump, pulling dsDNA into and through the RuvAB complex. RuvB forms 2 homohexamers on either side of HJ DNA bound by 1 or 2 RuvA tetramers; 4 subunits per hexamer contact DNA at a time. Coordinated motions by a converter formed by DNA-disengaged RuvB subunits stimulates ATP hydrolysis and nucleotide exchange. Immobilization of the converter enables RuvB to convert the ATP-contained energy into a lever motion, pulling 2 nucleotides of DNA out of the RuvA tetramer per ATP hydrolyzed, thus driving DNA branch migration. The RuvB motors rotate together with the DNA substrate, which together with the progressing nucleotide cycle form the mechanistic basis for DNA recombination by continuous HJ branch migration. Branch migration allows RuvC to scan DNA until it finds its consensus sequence, where it cleaves and resolves cruciform DNA. The chain is Holliday junction branch migration complex subunit RuvB from Parabacteroides distasonis (strain ATCC 8503 / DSM 20701 / CIP 104284 / JCM 5825 / NCTC 11152).